Here is an 81-residue protein sequence, read N- to C-terminus: Acyl carrier protein (81 aa).

Residues 4–79 (QEIFEKVQTI…QAVDFISQKV (76 aa)) form the Carrier domain. Ser-39 carries the O-(pantetheine 4'-phosphoryl)serine modification.

Belongs to the acyl carrier protein (ACP) family. Post-translationally, 4'-phosphopantetheine is transferred from CoA to a specific serine of apo-ACP by AcpS. This modification is essential for activity because fatty acids are bound in thioester linkage to the sulfhydryl of the prosthetic group.

It localises to the plastid. It is found in the chloroplast. The protein operates within lipid metabolism; fatty acid biosynthesis. Functionally, carrier of the growing fatty acid chain in fatty acid biosynthesis. The sequence is that of Acyl carrier protein from Guillardia theta (Cryptophyte).